A 172-amino-acid polypeptide reads, in one-letter code: dCTP deaminase, dUMP-forming (172 aa).

DCTP contacts are provided by residues 93-98 (RSSVGR), Asp111, 119-121 (TLE), Gln138, and Tyr151. The active-site Proton donor/acceptor is Glu121.

Belongs to the dCTP deaminase family. In terms of assembly, homotrimer.

The catalysed reaction is dCTP + 2 H2O = dUMP + NH4(+) + diphosphate. The protein operates within pyrimidine metabolism; dUMP biosynthesis; dUMP from dCTP: step 1/1. Bifunctional enzyme that catalyzes both the deamination of dCTP to dUTP and the hydrolysis of dUTP to dUMP without releasing the toxic dUTP intermediate. This is dCTP deaminase, dUMP-forming from Hathewaya histolytica (Clostridium histolyticum).